Consider the following 341-residue polypeptide: Lipoyl synthase (341 aa).

7 residues coordinate [4Fe-4S] cluster: Cys85, Cys90, Cys96, Cys111, Cys115, Cys118, and Ser325. Positions Phe97–Lys314 constitute a Radical SAM core domain.

The protein belongs to the radical SAM superfamily. Lipoyl synthase family. Requires [4Fe-4S] cluster as cofactor.

It is found in the cytoplasm. The enzyme catalyses [[Fe-S] cluster scaffold protein carrying a second [4Fe-4S](2+) cluster] + N(6)-octanoyl-L-lysyl-[protein] + 2 oxidized [2Fe-2S]-[ferredoxin] + 2 S-adenosyl-L-methionine + 4 H(+) = [[Fe-S] cluster scaffold protein] + N(6)-[(R)-dihydrolipoyl]-L-lysyl-[protein] + 4 Fe(3+) + 2 hydrogen sulfide + 2 5'-deoxyadenosine + 2 L-methionine + 2 reduced [2Fe-2S]-[ferredoxin]. It participates in protein modification; protein lipoylation via endogenous pathway; protein N(6)-(lipoyl)lysine from octanoyl-[acyl-carrier-protein]: step 2/2. Catalyzes the radical-mediated insertion of two sulfur atoms into the C-6 and C-8 positions of the octanoyl moiety bound to the lipoyl domains of lipoate-dependent enzymes, thereby converting the octanoylated domains into lipoylated derivatives. This chain is Lipoyl synthase, found in Pseudomonas fluorescens (strain SBW25).